Here is a 40-residue protein sequence, read N- to C-terminus: LVAHEENVRVGKDEGFAKAGGLSRLPLEAGESGTATFNVR.

It carries out the reaction Hydrolysis of terminal, non-reducing beta-D-glucosyl residues with release of beta-D-glucose.. The protein is Beta-glucosidase 1 of Passalora fulva (Tomato leaf mold).